The primary structure comprises 364 residues: tRNA 2-selenouridine synthase (364 aa).

Positions 14-137 (LIADTPIIDV…LRQTAIQATI (124 aa)) constitute a Rhodanese domain. Catalysis depends on C97, which acts as the S-selanylcysteine intermediate.

This sequence belongs to the SelU family. Monomer.

The catalysed reaction is 5-methylaminomethyl-2-thiouridine(34) in tRNA + selenophosphate + (2E)-geranyl diphosphate + H2O + H(+) = 5-methylaminomethyl-2-selenouridine(34) in tRNA + (2E)-thiogeraniol + phosphate + diphosphate. The enzyme catalyses 5-methylaminomethyl-2-thiouridine(34) in tRNA + (2E)-geranyl diphosphate = 5-methylaminomethyl-S-(2E)-geranyl-thiouridine(34) in tRNA + diphosphate. It catalyses the reaction 5-methylaminomethyl-S-(2E)-geranyl-thiouridine(34) in tRNA + selenophosphate + H(+) = 5-methylaminomethyl-2-(Se-phospho)selenouridine(34) in tRNA + (2E)-thiogeraniol. It carries out the reaction 5-methylaminomethyl-2-(Se-phospho)selenouridine(34) in tRNA + H2O = 5-methylaminomethyl-2-selenouridine(34) in tRNA + phosphate. In terms of biological role, involved in the post-transcriptional modification of the uridine at the wobble position (U34) of tRNA(Lys), tRNA(Glu) and tRNA(Gln). Catalyzes the conversion of 2-thiouridine (S2U-RNA) to 2-selenouridine (Se2U-RNA). Acts in a two-step process involving geranylation of 2-thiouridine (S2U) to S-geranyl-2-thiouridine (geS2U) and subsequent selenation of the latter derivative to 2-selenouridine (Se2U) in the tRNA chain. This Shigella dysenteriae serotype 1 (strain Sd197) protein is tRNA 2-selenouridine synthase.